The sequence spans 284 residues: Tropomyosin (284 aa).

Positions 1-273 form a coiled coil; sequence MDAIKKKMVA…KEKYKAISDE (273 aa). Residues 110 to 130 are compositionally biased toward basic and acidic residues; that stretch reads SGKLEEASKAADESERNRKVL. The segment at 110 to 134 is disordered; the sequence is SGKLEEASKAADESERNRKVLENLN.

It belongs to the tropomyosin family. As to quaternary structure, homodimer.

Its function is as follows. Tropomyosin, in association with the troponin complex, plays a central role in the calcium dependent regulation of muscle contraction. The sequence is that of Tropomyosin from Perna viridis (Asian green mussel).